The chain runs to 1016 residues: KN motif and ankyrin repeat domain-containing protein 4 (1016 aa).

Disordered stretches follow at residues 1 to 26 (MEKIDGKDQSSQGDEEKEPPKSYPYS), 70 to 91 (PRNFSLPNSGDRTYAVPPQQNW), 235 to 259 (AEPEEGDLKASSHLSQPGPSSAVQS), 401 to 485 (LSQE…LPRG), 506 to 563 (EEGS…SPQD), and 622 to 755 (AQAP…VSHL). Polar residues-rich tracts occupy residues 70-80 (PRNFSLPNSGD) and 246-258 (SHLSQPGPSSAVQ). Residues 346 to 409 (SSLKNQVLAL…KLSQERASEA (64 aa)) are a coiled coil. Composition is skewed to basic and acidic residues over residues 401–414 (LSQERASEAPDRTD) and 445–454 (PECRAPRAEK). The segment covering 460–469 (VQNNHKQSYP) has biased composition (polar residues). Over residues 632 to 650 (TPAPPPSTPPPPPPPPPEI) the composition is skewed to pro residues. Position 639 is a phosphothreonine (T639). Residues 695 to 708 (TSGEDSSPEDLSDS) show a composition bias toward acidic residues. Basic and acidic residues-rich tracts occupy residues 709–727 (ETEKKQDCSESREDRDLHP) and 745–755 (TSDRGEEVSHL). ANK repeat units lie at residues 838-868 (SGNTALHYSVSHSNFAIVKLLLDTGVCNVDH), 877-905 (VMITPLASAETKEDMAVVWKLLREGNVNI), 910-939 (GGQTALMLGVSHDREDMVQALLSCQADVNL), 943-973 (DGSSALMLACHQGNADLVRLLLAHPACNSSL), and 977-1007 (AGRTALSLVLNSPAHVEIAELLRAHSEPGRS).

It localises to the cytoplasm. Functionally, may be involved in the control of cytoskeleton formation by regulating actin polymerization. The chain is KN motif and ankyrin repeat domain-containing protein 4 (Kank4) from Mus musculus (Mouse).